The following is a 341-amino-acid chain: L-threonine 3-dehydrogenase (341 aa).

Zn(2+) is bound at residue C38. Active-site charge relay system residues include T40 and H43. Zn(2+) is bound by residues H63, E64, C93, C96, C99, and C107. NAD(+) contacts are provided by residues I175, D195, R200, 262 to 264, and 286 to 287; these read LGI and IY.

This sequence belongs to the zinc-containing alcohol dehydrogenase family. In terms of assembly, homotetramer. Requires Zn(2+) as cofactor.

Its subcellular location is the cytoplasm. It catalyses the reaction L-threonine + NAD(+) = (2S)-2-amino-3-oxobutanoate + NADH + H(+). The protein operates within amino-acid degradation; L-threonine degradation via oxydo-reductase pathway; glycine from L-threonine: step 1/2. Its function is as follows. Catalyzes the NAD(+)-dependent oxidation of L-threonine to 2-amino-3-ketobutyrate. The polypeptide is L-threonine 3-dehydrogenase (Chromobacterium violaceum (strain ATCC 12472 / DSM 30191 / JCM 1249 / CCUG 213 / NBRC 12614 / NCIMB 9131 / NCTC 9757 / MK)).